Reading from the N-terminus, the 362-residue chain is Peptide chain release factor 1 (362 aa).

The residue at position 237 (glutamine 237) is an N5-methylglutamine.

This sequence belongs to the prokaryotic/mitochondrial release factor family. Methylated by PrmC. Methylation increases the termination efficiency of RF1.

The protein resides in the cytoplasm. In terms of biological role, peptide chain release factor 1 directs the termination of translation in response to the peptide chain termination codons UAG and UAA. The sequence is that of Peptide chain release factor 1 from Legionella pneumophila (strain Paris).